The sequence spans 219 residues: Ribose-5-phosphate isomerase A (219 aa).

Residues 29-32, 82-85, and 95-98 each bind substrate; these read TGST, DGAD, and KGGG. The active-site Proton acceptor is the E104. Substrate is bound at residue K122.

It belongs to the ribose 5-phosphate isomerase family. As to quaternary structure, homodimer.

It carries out the reaction aldehydo-D-ribose 5-phosphate = D-ribulose 5-phosphate. It participates in carbohydrate degradation; pentose phosphate pathway; D-ribose 5-phosphate from D-ribulose 5-phosphate (non-oxidative stage): step 1/1. Its function is as follows. Catalyzes the reversible conversion of ribose-5-phosphate to ribulose 5-phosphate. This is Ribose-5-phosphate isomerase A from Chromobacterium violaceum (strain ATCC 12472 / DSM 30191 / JCM 1249 / CCUG 213 / NBRC 12614 / NCIMB 9131 / NCTC 9757 / MK).